Reading from the N-terminus, the 473-residue chain is BTB/POZ domain-containing protein KCTD8 (473 aa).

Residues methionine 1 to proline 36 form a disordered region. Positions serine 21–glycine 35 are enriched in low complexity. The region spanning glutamate 44–glutamate 122 is the BTB domain. The residue at position 78 (serine 78) is a Phosphoserine. At arginine 80 the chain carries Omega-N-methylarginine. The tract at residues isoleucine 326–asparagine 409 is disordered. Residues lysine 330–serine 346 show a composition bias toward basic and acidic residues. A compositionally biased stretch (polar residues) spans glutamate 347–threonine 388. Phosphoserine is present on serine 410.

As to quaternary structure, interacts as a tetramer with GABRB1 and GABRB2.

It is found in the presynaptic cell membrane. The protein localises to the postsynaptic cell membrane. Functionally, auxiliary subunit of GABA-B receptors that determine the pharmacology and kinetics of the receptor response. Increases agonist potency and markedly alter the G-protein signaling of the receptors by accelerating onset and promoting desensitization. The protein is BTB/POZ domain-containing protein KCTD8 (KCTD8) of Homo sapiens (Human).